Reading from the N-terminus, the 215-residue chain is Cytokinin riboside 5'-monophosphate phosphoribohydrolase LOG4 (215 aa).

Substrate is bound by residues E84, 102 to 103 (RK), 119 to 125 (GYGTLEE), and T131.

It belongs to the LOG family. As to expression, expressed in roots and shoots. Detected in root procambium, lateral root primordia, vascular tissues of cotyledons, leaves and stems, shoot apical meristem, axillary buds, young inflorescences, fruit abscission zones and basal part of ovules.

The protein resides in the cytoplasm. It is found in the nucleus. It carries out the reaction N(6)-(dimethylallyl)adenosine 5'-phosphate + H2O = N(6)-dimethylallyladenine + D-ribose 5-phosphate. The catalysed reaction is 9-ribosyl-trans-zeatin 5'-phosphate + H2O = trans-zeatin + D-ribose 5-phosphate. Functionally, cytokinin-activating enzyme working in the direct activation pathway. Phosphoribohydrolase that converts inactive cytokinin nucleotides to the biologically active free-base forms. This is Cytokinin riboside 5'-monophosphate phosphoribohydrolase LOG4 (LOG4) from Arabidopsis thaliana (Mouse-ear cress).